The chain runs to 378 residues: Spermatogenic leucine zipper protein 1 (378 aa).

A disordered region spans residues 1–31 (MSDTDNSAEMPARCPSPNPAPGAKQEPPNSG). Position 106 is a phosphoserine (Ser-106). The interval 116–122 (KNKIRFK) is interaction with PPP1CC isoform gamma-2. The tract at residues 116-127 (KNKIRFKDDLFI) is helix-loop-helix motif. The segment at 128 to 193 (HFDPEREQNT…HLRGEYRKLR (66 aa)) is basic motif. Residues 182 to 233 (SLHLRGEYRKLRNNMEQLLQEADHWSKQHNELSELMRSYQECQNETQETTDK) adopt a coiled-coil conformation. Ser-207 bears the Phosphoserine mark. The tract at residues 252–273 (LEEQVKKLSHDTHALHLIAALL) is leucine-zipper.

As to quaternary structure, interacts with PPP1CC isoform gamma-2. This interaction can prevent SPZ1 binding to the E-box and inhibits PPP1CC activity. Post-translationally, phosphorylated by MAPK1/ERK2 and MAPK3/ERK1. In terms of tissue distribution, expressed specifically in the testis and epidydimis. In the testis expressed in both germ cells and somatic cells (Sertoli and Leydig cells). Expressed in several tumor cell lines.

It localises to the cytoplasm. Its subcellular location is the nucleus. Its function is as follows. Transcription factor that binds to the DNA sequence 5'-CANNTG-3'(E box) and the G-box motif. Directly binds to a guanine-rich region of the PCNA promoter and up-regulates its expression which in turn induces cell transformation and tumor formation. May play an important role in the regulation of cell proliferation and differentiation during spermatogenesis. This is Spermatogenic leucine zipper protein 1 (Spz1) from Mus musculus (Mouse).